The chain runs to 121 residues: Small ribosomal subunit protein uS13 (121 aa).

A disordered region spans residues 91 to 121 (HRMSLPVRGQRTRTNARTRRGSRKTVAGRKK). Over residues 100-121 (QRTRTNARTRRGSRKTVAGRKK) the composition is skewed to basic residues.

The protein belongs to the universal ribosomal protein uS13 family. As to quaternary structure, part of the 30S ribosomal subunit. Forms a loose heterodimer with protein S19. Forms two bridges to the 50S subunit in the 70S ribosome.

Located at the top of the head of the 30S subunit, it contacts several helices of the 16S rRNA. In the 70S ribosome it contacts the 23S rRNA (bridge B1a) and protein L5 of the 50S subunit (bridge B1b), connecting the 2 subunits; these bridges are implicated in subunit movement. Contacts the tRNAs in the A and P-sites. The polypeptide is Small ribosomal subunit protein uS13 (Prochlorococcus marinus (strain SARG / CCMP1375 / SS120)).